The chain runs to 101 residues: YcgL domain-containing protein ABBFA_001807 (101 aa).

The YcgL domain occupies 1–92 (MHCDIYRSSK…PPEGLINPNA (92 aa)).

The chain is YcgL domain-containing protein ABBFA_001807 from Acinetobacter baumannii (strain AB307-0294).